The sequence spans 559 residues: NXPE family member 2 (559 aa).

The chain crosses the membrane as a helical span at residues 17–37 (AIARKLLLMLTFILIFWIIYL).

Belongs to the NXPE family.

It is found in the membrane. This is NXPE family member 2 (NXPE2) from Homo sapiens (Human).